A 128-amino-acid polypeptide reads, in one-letter code: Probable 4-amino-4-deoxy-L-arabinose-phosphoundecaprenol flippase subunit ArnF (128 aa).

Topologically, residues 1–2 are cytoplasmic; sequence MG. Residues 3-23 form a helical membrane-spanning segment; it reads LIWGLFSVIIASVAQLSLGFA. Residues 24 to 35 lie on the Periplasmic side of the membrane; it reads ASHLPPMTHLWD. The chain crosses the membrane as a helical span at residues 36 to 56; sequence FIAALLAFGLDARILLLGLLG. Over 57-75 the chain is Cytoplasmic; that stretch reads YLLSVFCWYKTLHKLALSK. The chain crosses the membrane as a helical span at residues 76 to 96; sequence AYALLSMSYVLVWIASMVLPG. At 97 to 100 the chain is on the periplasmic side; sequence REGT. The helical transmembrane segment at 101–121 threads the bilayer; that stretch reads FSLKALLGVACIMSGLMLIFL. At 122–128 the chain is on the cytoplasmic side; the sequence is PTTKQRY.

The protein belongs to the ArnF family. Heterodimer of ArnE and ArnF.

The protein resides in the cell inner membrane. It functions in the pathway bacterial outer membrane biogenesis; lipopolysaccharide biosynthesis. Translocates 4-amino-4-deoxy-L-arabinose-phosphoundecaprenol (alpha-L-Ara4N-phosphoundecaprenol) from the cytoplasmic to the periplasmic side of the inner membrane. This Shigella flexneri serotype 5b (strain 8401) protein is Probable 4-amino-4-deoxy-L-arabinose-phosphoundecaprenol flippase subunit ArnF.